A 158-amino-acid polypeptide reads, in one-letter code: Endoribonuclease YbeY (158 aa).

Residues His-121, His-125, and His-131 each contribute to the Zn(2+) site.

The protein belongs to the endoribonuclease YbeY family. Requires Zn(2+) as cofactor.

It localises to the cytoplasm. Single strand-specific metallo-endoribonuclease involved in late-stage 70S ribosome quality control and in maturation of the 3' terminus of the 16S rRNA. This Exiguobacterium sp. (strain ATCC BAA-1283 / AT1b) protein is Endoribonuclease YbeY.